The sequence spans 864 residues: Alanine--tRNA ligase (864 aa).

Zn(2+) is bound by residues histidine 553, histidine 557, cysteine 655, and histidine 659. Residues 828-847 form a disordered region; the sequence is VGGKGGGRPDMAQAGGKDPS.

Belongs to the class-II aminoacyl-tRNA synthetase family. Zn(2+) is required as a cofactor.

Its subcellular location is the cytoplasm. It catalyses the reaction tRNA(Ala) + L-alanine + ATP = L-alanyl-tRNA(Ala) + AMP + diphosphate. In terms of biological role, catalyzes the attachment of alanine to tRNA(Ala) in a two-step reaction: alanine is first activated by ATP to form Ala-AMP and then transferred to the acceptor end of tRNA(Ala). Also edits incorrectly charged Ser-tRNA(Ala) and Gly-tRNA(Ala) via its editing domain. The sequence is that of Alanine--tRNA ligase from Hydrogenovibrio crunogenus (strain DSM 25203 / XCL-2) (Thiomicrospira crunogena).